A 518-amino-acid chain; its full sequence is Sensor protein kinase HptS (518 aa).

Transmembrane regions (helical) follow at residues 20–40 (IFPVFLVIIIGLVSFYAIYIW) and 222–242 (GITLLIVMAVVLVLLVIFGFI). Positions 297–513 (EQLIHSIEHT…LICYKIPLSR (217 aa)) constitute a Histidine kinase domain. Residue H325 is modified to Phosphohistidine; by autocatalysis.

Post-translationally, autophosphorylated.

It localises to the cell membrane. It catalyses the reaction ATP + protein L-histidine = ADP + protein N-phospho-L-histidine.. In terms of biological role, member of the two-component regulatory system HptS/HptR that regulates genes involved in hexose phosphate transport system in response to changes in extracellular phosphate sources. May act as a sensor protein kinase which is autophosphorylated at a histidine residue and transfers its phosphate group to the conserved aspartic acid residue in the regulatory domain of HptS. In turn, HptS antagonizes CcpA-dependent transcription of a subset of CcpA-regulated genes involved in antibiotic susceptibility. In Staphylococcus aureus (strain USA300), this protein is Sensor protein kinase HptS (hptS).